Consider the following 64-residue polypeptide: Insect toxin OsI1 (64 aa).

Residues 1 to 61 (DGYPKQKDGC…MWKYETNTCG (61 aa)) form the LCN-type CS-alpha/beta domain. Cystine bridges form between Cys-10-Cys-60, Cys-14-Cys-35, Cys-21-Cys-42, and Cys-25-Cys-44. A Glycine amide modification is found at Gly-61.

Belongs to the long (4 C-C) scorpion toxin superfamily. Sodium channel inhibitor family. Beta subfamily. In terms of tissue distribution, expressed by the venom gland.

The protein localises to the secreted. Its function is as follows. Depressant insect beta-toxins cause a transient contraction paralysis followed by a slow flaccid paralysis. They bind voltage-independently at site-4 of sodium channels (Nav) and shift the voltage of activation toward more negative potentials thereby affecting sodium channel activation and promoting spontaneous and repetitive firing. This toxin is active only on insects. This chain is Insect toxin OsI1, found in Orthochirus scrobiculosus (Central Asian scorpion).